A 170-amino-acid chain; its full sequence is Protein-lysine myristoyltransferase HlyC (170 aa).

Histidine 23 is a catalytic residue. Histidine 151 is a binding site for heme.

The protein belongs to the RTX toxin acyltransferase family. Monomer. In terms of processing, proteolytically cleaved by the protease systems ClpAP, ClpXP and FtsH, leading to its degradation.

It localises to the cytoplasm. It carries out the reaction tetradecanoyl-[ACP] + L-lysyl-[protein] = N(6)-tetradecanoyl-L-lysyl-[protein] + holo-[ACP] + H(+). With respect to regulation, the acyltransferase activity is inhibited by heme. Its function is as follows. Protein-lysine myristoyltransferase that catalyzes myristoylation of the protoxin (HlyA) at two internal lysine residues, thereby converting it to the active toxin. The polypeptide is Protein-lysine myristoyltransferase HlyC (Escherichia coli).